Here is a 756-residue protein sequence, read N- to C-terminus: Putative DNA ligase 052L (756 aa).

The active-site N6-AMP-lysine intermediate is the lysine 103. Low complexity predominate over residues 610–620 (PSAAGSASPCR). The segment at 610–630 (PSAAGSASPCRPTKRRDDWFD) is disordered. Residues 648–742 (KKRPPMQGYV…LKRQRKCRAR (95 aa)) form the BRCT domain.

This sequence belongs to the NAD-dependent DNA ligase family.

It carries out the reaction NAD(+) + (deoxyribonucleotide)n-3'-hydroxyl + 5'-phospho-(deoxyribonucleotide)m = (deoxyribonucleotide)n+m + AMP + beta-nicotinamide D-nucleotide.. Its function is as follows. Catalyzes the formation of phosphodiester linkages between 5'-phosphoryl and 3'-hydroxyl groups in double-stranded DNA using NAD as a coenzyme and as the energy source for the reaction. The polypeptide is Putative DNA ligase 052L (Invertebrate iridescent virus 3 (IIV-3)).